Reading from the N-terminus, the 293-residue chain is Ribosomal protein L11 methyltransferase (293 aa).

Thr-144, Gly-165, Asp-187, and Asn-228 together coordinate S-adenosyl-L-methionine.

It belongs to the methyltransferase superfamily. PrmA family.

Its subcellular location is the cytoplasm. It carries out the reaction L-lysyl-[protein] + 3 S-adenosyl-L-methionine = N(6),N(6),N(6)-trimethyl-L-lysyl-[protein] + 3 S-adenosyl-L-homocysteine + 3 H(+). Methylates ribosomal protein L11. This Methylococcus capsulatus (strain ATCC 33009 / NCIMB 11132 / Bath) protein is Ribosomal protein L11 methyltransferase.